A 359-amino-acid chain; its full sequence is tRNA-specific 2-thiouridylase MnmA (359 aa).

ATP-binding positions include 10–17 (GISGGVDS) and leucine 36. Residue cysteine 101 is the Nucleophile of the active site. Cysteine 101 and cysteine 197 are disulfide-bonded. Glycine 125 is an ATP binding site. Positions 147-149 (KDQ) are interaction with tRNA. Residue cysteine 197 is the Cysteine persulfide intermediate of the active site. Positions 306–307 (RY) are interaction with tRNA.

It belongs to the MnmA/TRMU family.

The protein localises to the cytoplasm. The enzyme catalyses S-sulfanyl-L-cysteinyl-[protein] + uridine(34) in tRNA + AH2 + ATP = 2-thiouridine(34) in tRNA + L-cysteinyl-[protein] + A + AMP + diphosphate + H(+). Functionally, catalyzes the 2-thiolation of uridine at the wobble position (U34) of tRNA, leading to the formation of s(2)U34. The sequence is that of tRNA-specific 2-thiouridylase MnmA from Chlorobium chlorochromatii (strain CaD3).